The following is a 168-amino-acid chain: Ribonuclease H (168 aa).

In terms of domain architecture, RNase H type-1 spans 10–151; sequence NNIPVKIYTD…ADKLATNGKI (142 aa). D19, E57, D79, and D143 together coordinate Mg(2+).

Belongs to the RNase H family. Monomer. Requires Mg(2+) as cofactor.

It is found in the cytoplasm. The catalysed reaction is Endonucleolytic cleavage to 5'-phosphomonoester.. Functionally, endonuclease that specifically degrades the RNA of RNA-DNA hybrids. The polypeptide is Ribonuclease H (Orientia tsutsugamushi (strain Boryong) (Rickettsia tsutsugamushi)).